A 73-amino-acid chain; its full sequence is UPF0346 protein BLi02292/BL01432 (73 aa).

This sequence belongs to the UPF0346 family.

This chain is UPF0346 protein BLi02292/BL01432, found in Bacillus licheniformis (strain ATCC 14580 / DSM 13 / JCM 2505 / CCUG 7422 / NBRC 12200 / NCIMB 9375 / NCTC 10341 / NRRL NRS-1264 / Gibson 46).